The sequence spans 551 residues: Probable glucomannan 4-beta-mannosyltransferase 3 (551 aa).

A helical membrane pass occupies residues 60 to 80; the sequence is ACLALSAMLLADAVLMAAACF. D154 is a catalytic residue. Residues D213 and D215 each coordinate substrate. D307 is a catalytic residue. 4 helical membrane-spanning segments follow: residues 386-406, 409-429, 504-524, and 525-545; these read VVAH…SVLI, VTVP…LHAI, ILFS…GGDY, and YFVY…GFCG.

The protein belongs to the glycosyltransferase 2 family. Plant cellulose synthase-like A subfamily.

The protein localises to the golgi apparatus membrane. The catalysed reaction is GDP-mannose + (glucomannan)n = GDP + (glucomannan)n+1.. Its function is as follows. Probable mannan synthase which consists of a 4-beta-mannosyltransferase activity on mannan using GDP-mannose. The beta-1,4-mannan product is the backbone for galactomannan synthesis by galactomannan galactosyltransferase. Galactomannan is a noncellulosic polysaccharides of plant cell wall. The sequence is that of Probable glucomannan 4-beta-mannosyltransferase 3 from Oryza sativa subsp. japonica (Rice).